We begin with the raw amino-acid sequence, 434 residues long: D-amino acid dehydrogenase (434 aa).

Residue 3–17 (VLVLGSGVIGTASAY) participates in FAD binding.

Belongs to the DadA oxidoreductase family. Requires FAD as cofactor.

It carries out the reaction a D-alpha-amino acid + A + H2O = a 2-oxocarboxylate + AH2 + NH4(+). Its pathway is amino-acid degradation; D-alanine degradation; NH(3) and pyruvate from D-alanine: step 1/1. Functionally, oxidative deamination of D-amino acids. This chain is D-amino acid dehydrogenase, found in Pseudomonas putida (strain GB-1).